Consider the following 336-residue polypeptide: Glyceraldehyde-3-phosphate dehydrogenase (336 aa).

Residues 12-13, Asp34, Arg78, and Thr121 each bind NAD(+); that span reads RI. D-glyceraldehyde 3-phosphate contacts are provided by residues 151-153, Thr182, Arg199, 212-213, and Arg235; these read SCT and TG. The active-site Nucleophile is the Cys152. Asn316 serves as a coordination point for NAD(+).

It belongs to the glyceraldehyde-3-phosphate dehydrogenase family. As to quaternary structure, homotetramer.

It localises to the cytoplasm. It carries out the reaction D-glyceraldehyde 3-phosphate + phosphate + NAD(+) = (2R)-3-phospho-glyceroyl phosphate + NADH + H(+). The protein operates within carbohydrate degradation; glycolysis; pyruvate from D-glyceraldehyde 3-phosphate: step 1/5. Its function is as follows. Catalyzes the oxidative phosphorylation of glyceraldehyde 3-phosphate (G3P) to 1,3-bisphosphoglycerate (BPG) using the cofactor NAD. The first reaction step involves the formation of a hemiacetal intermediate between G3P and a cysteine residue, and this hemiacetal intermediate is then oxidized to a thioester, with concomitant reduction of NAD to NADH. The reduced NADH is then exchanged with the second NAD, and the thioester is attacked by a nucleophilic inorganic phosphate to produce BPG. The sequence is that of Glyceraldehyde-3-phosphate dehydrogenase (gap) from Streptococcus pyogenes serotype M3 (strain ATCC BAA-595 / MGAS315).